The sequence spans 67 residues: DNA-directed RNA polymerase subunit omega (67 aa).

It belongs to the RNA polymerase subunit omega family. In terms of assembly, the RNAP catalytic core consists of 2 alpha, 1 beta, 1 beta' and 1 omega subunit. When a sigma factor is associated with the core the holoenzyme is formed, which can initiate transcription.

It carries out the reaction RNA(n) + a ribonucleoside 5'-triphosphate = RNA(n+1) + diphosphate. In terms of biological role, promotes RNA polymerase assembly. Latches the N- and C-terminal regions of the beta' subunit thereby facilitating its interaction with the beta and alpha subunits. The sequence is that of DNA-directed RNA polymerase subunit omega from Legionella pneumophila (strain Paris).